The sequence spans 507 residues: TOM1-like protein 2 (507 aa).

The VHS domain maps to 20-152 (ATDGSLQSED…ELKRKGVEFP (133 aa)). S160 bears the Phosphoserine mark. The segment at 162 to 210 (IHTPQRSVPEVDPAATMPRSQSQQRTSAGSYSSPPPAPYSAPQAPALSV) is disordered. Position 164 is a phosphothreonine (T164). Residues 219–307 (EQIARLRSEL…VFLRYERFER (89 aa)) form the GAT domain. The short motif at 329-334 (NLIDLG) is the Clathrin-binding element. A disordered region spans residues 467 to 507 (RAKAAEMVPDLPSPPMEAPAPASNPSGRKKPERSEDALFAL). The span at 498-507 (ERSEDALFAL) shows a compositional bias: basic and acidic residues.

This sequence belongs to the TOM1 family. In terms of assembly, interacts with clathrin, SRC and TOLLIP. Interacts with MYO6. Ubiquitously expressed with higher expression in heart and skeletal muscle.

In terms of biological role, acts as a MYO6/Myosin VI adapter protein that targets myosin VI to endocytic structures. May also play a role in recruiting clathrin to endosomes. May regulate growth factor-induced mitogenic signaling. This Homo sapiens (Human) protein is TOM1-like protein 2 (TOM1L2).